A 305-amino-acid chain; its full sequence is Translation initiation factor eIF2B subunit alpha (305 aa).

The protein belongs to the eIF-2B alpha/beta/delta subunits family. In terms of assembly, component of the translation initiation factor 2B (eIF2B) complex which is a heterodecamer of two sets of five different subunits: alpha, beta, gamma, delta and epsilon. Subunits alpha, beta and delta comprise a regulatory subcomplex and subunits epsilon and gamma comprise a catalytic subcomplex. Within the complex, the hexameric regulatory complex resides at the center, with the two heterodimeric catalytic subcomplexes bound on opposite sides.

The protein resides in the cytoplasm. Its subcellular location is the cytosol. Its function is as follows. Acts as a component of the translation initiation factor 2B (eIF2B) complex, which catalyzes the exchange of GDP for GTP on eukaryotic initiation factor 2 (eIF2) gamma subunit. Its guanine nucleotide exchange factor activity is repressed when bound to eIF2 complex phosphorylated on the alpha subunit, thereby limiting the amount of methionyl-initiator methionine tRNA available to the ribosome and consequently global translation is repressed. The polypeptide is Translation initiation factor eIF2B subunit alpha (Caenorhabditis elegans).